The following is a 474-amino-acid chain: Methylenetetrahydrofolate--tRNA-(uracil-5-)-methyltransferase TrmFO (474 aa).

9–14 serves as a coordination point for FAD; the sequence is GGGLAG. The disordered stretch occupies residues 425–451; it reads PPLERMPRNETGKRLRGPEKAALKKRA. Residues 429 to 451 are compositionally biased toward basic and acidic residues; that stretch reads RMPRNETGKRLRGPEKAALKKRA.

Belongs to the MnmG family. TrmFO subfamily. It depends on FAD as a cofactor.

The protein localises to the cytoplasm. The catalysed reaction is uridine(54) in tRNA + (6R)-5,10-methylene-5,6,7,8-tetrahydrofolate + NADH + H(+) = 5-methyluridine(54) in tRNA + (6S)-5,6,7,8-tetrahydrofolate + NAD(+). It catalyses the reaction uridine(54) in tRNA + (6R)-5,10-methylene-5,6,7,8-tetrahydrofolate + NADPH + H(+) = 5-methyluridine(54) in tRNA + (6S)-5,6,7,8-tetrahydrofolate + NADP(+). Catalyzes the folate-dependent formation of 5-methyl-uridine at position 54 (M-5-U54) in all tRNAs. In Methylorubrum populi (strain ATCC BAA-705 / NCIMB 13946 / BJ001) (Methylobacterium populi), this protein is Methylenetetrahydrofolate--tRNA-(uracil-5-)-methyltransferase TrmFO.